The sequence spans 122 residues: Small ribosomal subunit protein uS13 (122 aa).

Basic residues predominate over residues 98 to 116; that stretch reads VRGQKTKTNARTRKGRRKT. Residues 98 to 122 are disordered; that stretch reads VRGQKTKTNARTRKGRRKTVGAATK.

The protein belongs to the universal ribosomal protein uS13 family. As to quaternary structure, part of the 30S ribosomal subunit. Forms a loose heterodimer with protein S19. Forms two bridges to the 50S subunit in the 70S ribosome.

In terms of biological role, located at the top of the head of the 30S subunit, it contacts several helices of the 16S rRNA. In the 70S ribosome it contacts the 23S rRNA (bridge B1a) and protein L5 of the 50S subunit (bridge B1b), connecting the 2 subunits; these bridges are implicated in subunit movement. Contacts the tRNAs in the A and P-sites. The polypeptide is Small ribosomal subunit protein uS13 (Campylobacter fetus subsp. fetus (strain 82-40)).